A 337-amino-acid polypeptide reads, in one-letter code: F420-dependent glucose-6-phosphate dehydrogenase (337 aa).

Residue Asp40 coordinates coenzyme F420-(gamma-Glu)n. His41 serves as the catalytic Proton donor. Coenzyme F420-(gamma-Glu)n contacts are provided by residues Thr77 and 108–109 (SG). Glu110 functions as the Proton acceptor in the catalytic mechanism. Residues Asn113, 178–179 (GG), and 181–182 (VV) each bind coenzyme F420-(gamma-Glu)n. The substrate site is built by Thr196, Lys199, Lys260, and Arg284.

Belongs to the F420-dependent glucose-6-phosphate dehydrogenase family. As to quaternary structure, homodimer.

It catalyses the reaction oxidized coenzyme F420-(gamma-L-Glu)(n) + D-glucose 6-phosphate + H(+) = 6-phospho-D-glucono-1,5-lactone + reduced coenzyme F420-(gamma-L-Glu)(n). Its function is as follows. Catalyzes the coenzyme F420-dependent oxidation of glucose 6-phosphate (G6P) to 6-phosphogluconolactone. In Rhodococcus erythropolis (strain PR4 / NBRC 100887), this protein is F420-dependent glucose-6-phosphate dehydrogenase.